We begin with the raw amino-acid sequence, 335 residues long: HTH-type transcriptional regulator LacR (335 aa).

An HTH lacI-type domain is found at 1–58; sequence MRTIKEIALESGYSPATVSRLLNNDPNLSITADTKNKILEIANKLGYWEDHQEKKIKP. A DNA-binding region (H-T-H motif) is located at residues 4-23; sequence IKEIALESGYSPATVSRLLN.

Its pathway is carbohydrate metabolism; lactose degradation [regulation]. Negatively regulates the transcription of the lactose utilization genes lacL and lacM. This chain is HTH-type transcriptional regulator LacR (lacR), found in Lactobacillus helveticus (Lactobacillus suntoryeus).